We begin with the raw amino-acid sequence, 254 residues long: Hydroxyacylglutathione hydrolase (254 aa).

The Zn(2+) site is built by H53, H55, D57, H58, H111, D128, and H166.

It belongs to the metallo-beta-lactamase superfamily. Glyoxalase II family. In terms of assembly, monomer. Zn(2+) serves as cofactor.

The enzyme catalyses an S-(2-hydroxyacyl)glutathione + H2O = a 2-hydroxy carboxylate + glutathione + H(+). It functions in the pathway secondary metabolite metabolism; methylglyoxal degradation; (R)-lactate from methylglyoxal: step 2/2. Its function is as follows. Thiolesterase that catalyzes the hydrolysis of S-D-lactoyl-glutathione to form glutathione and D-lactic acid. In Aeromonas hydrophila subsp. hydrophila (strain ATCC 7966 / DSM 30187 / BCRC 13018 / CCUG 14551 / JCM 1027 / KCTC 2358 / NCIMB 9240 / NCTC 8049), this protein is Hydroxyacylglutathione hydrolase.